Consider the following 332-residue polypeptide: tRNA dimethylallyltransferase (332 aa).

17–24 lines the ATP pocket; sequence GPTCSGKS. A substrate-binding site is contributed by 19 to 24; the sequence is TCSGKS. 2 interaction with substrate tRNA regions span residues 42 to 45 and 166 to 170; these read DSMQ and QRISR.

Belongs to the IPP transferase family. Monomer. Requires Mg(2+) as cofactor.

It catalyses the reaction adenosine(37) in tRNA + dimethylallyl diphosphate = N(6)-dimethylallyladenosine(37) in tRNA + diphosphate. Its function is as follows. Catalyzes the transfer of a dimethylallyl group onto the adenine at position 37 in tRNAs that read codons beginning with uridine, leading to the formation of N6-(dimethylallyl)adenosine (i(6)A). The sequence is that of tRNA dimethylallyltransferase from Gluconobacter oxydans (strain 621H) (Gluconobacter suboxydans).